A 640-amino-acid chain; its full sequence is Chaperone protein DnaK (640 aa).

The residue at position 198 (Thr-198) is a Phosphothreonine; by autocatalysis. A disordered region spans residues 600–640 (KTQGAGAEGGEQPHGEQEAGGAAKGEKVVDADFEEVKDDKK). Positions 630–640 (ADFEEVKDDKK) are enriched in acidic residues.

The protein belongs to the heat shock protein 70 family.

Acts as a chaperone. The protein is Chaperone protein DnaK of Citrifermentans bemidjiense (strain ATCC BAA-1014 / DSM 16622 / JCM 12645 / Bem) (Geobacter bemidjiensis).